We begin with the raw amino-acid sequence, 208 residues long: MARYIGPSCKLARREGADLSLKSPSRALDSKCKLEQRPGQHGAVRKSKLSDYASQLREKQKVKRIYGVLERQFRNYYKNASTKKGNTGENLLQLLETRLDNVIYRMGFAVTRPAARQLVSHRGVLVNGKIVNLPSYHVKPGDIVALSQRAQKYLCVQESLTIKDQHGSAFSWVEVDSEKFSGVFKALPDRADLPSDINEALIVELYSK.

The region spanning 97 to 158 (TRLDNVIYRM…RAQKYLCVQE (62 aa)) is the S4 RNA-binding domain.

It belongs to the universal ribosomal protein uS4 family. Part of the 30S ribosomal subunit. Contacts protein S5. The interaction surface between S4 and S5 is involved in control of translational fidelity.

One of the primary rRNA binding proteins, it binds directly to 16S rRNA where it nucleates assembly of the body of the 30S subunit. Functionally, with S5 and S12 plays an important role in translational accuracy. The chain is Small ribosomal subunit protein uS4 from Xylella fastidiosa (strain M12).